A 673-amino-acid chain; its full sequence is Pesticin receptor (673 aa).

Positions 1 to 22 (MKMTRLYPLALGGLLLPAIANA) are cleaved as a signal peptide. A TonB box motif is present at residues 30–37 (STLEVTAS). Positions 41 to 155 (SRSASANNVS…QGGIINIVTQ (115 aa)) constitute a TBDR plug domain. Positions 160 to 672 (TPRGYIEGGV…TVGINTRIDF (513 aa)) constitute a TBDR beta-barrel domain. The TonB C-terminal box signature appears at 657–673 (QVNMGRTVGINTRIDFF).

It belongs to the TonB-dependent receptor family.

The protein resides in the cell outer membrane. Receptor for the bacteriocin pesticin and for the siderophore yersiniabactin. The chain is Pesticin receptor (fyuA) from Yersinia enterocolitica serotype O:8 / biotype 1B (strain NCTC 13174 / 8081).